Here is a 189-residue protein sequence, read N- to C-terminus: UPF0301 protein PST_3956 (189 aa).

Belongs to the UPF0301 (AlgH) family.

The chain is UPF0301 protein PST_3956 from Stutzerimonas stutzeri (strain A1501) (Pseudomonas stutzeri).